The sequence spans 702 residues: Antigen peptide transporter 2 (702 aa).

Residues 1 to 6 (MALSYL) lie on the Lumenal side of the membrane. Residues 7–27 (RPWVSLLLADMALLGLLQGSL) form a helical membrane-spanning segment. Over 28-56 (GNLLPQGLPGLWIEGTLRLGVLWGLLKVG) the chain is Cytoplasmic. The helical transmembrane segment at 57-77 (ELLGLVGTLLPLLCLATPLFF) threads the bilayer. The Lumenal portion of the chain corresponds to 78-98 (SLRALVGGTASTSVVRVASAS). The helical transmembrane segment at 99-119 (WGWLLAGYGAVALSWAVWAVL) threads the bilayer. Residues 120-147 (SPAGVQEKEPGQENRTLMKRLLKLSRPD) lie on the Cytoplasmic side of the membrane. A helical transmembrane segment spans residues 148-168 (LPFLIAAFFFLVVAVWGETLI). The 284-residue stretch at 151–434 (LIAAFFFLVV…LVYMYGDMLS (284 aa)) folds into the ABC transmembrane type-1 domain. The Lumenal segment spans residues 169–186 (PRYSGRVIDILGGDFDPD). Residues 187 to 207 (AFASAIFFMCLFSVGSSFSAG) traverse the membrane as a helical segment. Over 208 to 265 (CRGGSFLFTMSRINLRIREQLFSSLLRQDLGFFQETKTGELNSRLSSDTSLMSRWLPF) the chain is Cytoplasmic. The helical transmembrane segment at 266–286 (NANILLRSLVKVVGLYFFMLQ) threads the bilayer. Over 287 to 292 (VSPRLT) the chain is Lumenal. A helical transmembrane segment spans residues 293–313 (FLSLLDLPLTIAAEKVYNPRH). The tract at residues 300 to 388 (PLTIAAEKVY…RRVMALGMQV (89 aa)) is part of the peptide-binding site. Residues 314–373 (QAVLKEIQDAVAKAGQVVREAVGGLQTVRSFGAEEQEVSHYKEALERCRQLWWRRDLEKD) lie on the Cytoplasmic side of the membrane. The chain crosses the membrane as a helical span at residues 374-394 (VYLVIRRVMALGMQVLILNCG). At 395–407 (VQQILAGEVTRGG) the chain is on the lumenal side. Residues 408 to 428 (LLSFLLYQEEVGQYVRNLVYM) form a helical membrane-spanning segment. Residues 413 to 432 (LYQEEVGQYVRNLVYMYGDM) form a part of the peptide-binding site region. The Cytoplasmic portion of the chain corresponds to 429 to 702 (YGDMLSNVGA…AHLVQQRLEA (274 aa)). The ABC transporter domain occupies 467–701 (VEFQDVSFSY…YAHLVQQRLE (235 aa)). 502–509 (GPNGSGKS) is an ATP binding site.

The protein belongs to the ABC transporter superfamily. ABCB family. MHC peptide exporter (TC 3.A.1.209) subfamily. Heterodimer of TAP1 and TAP2 (TAP1-TAP2). A component of the peptide loading complex (PLC), interacts via TAPBP with MHCI heterodimer; this interaction mediates peptide-MHCI assembly. The cofactor is Mg(2+).

It localises to the endoplasmic reticulum membrane. It catalyses the reaction a peptide antigen(in) + ATP + H2O = a peptide antigen(out) + ADP + phosphate + H(+). ABC transporter associated with antigen processing. In complex with TAP1 mediates unidirectional translocation of peptide antigens from cytosol to endoplasmic reticulum (ER) for loading onto MHC class I (MHCI) molecules. Uses the chemical energy of ATP to export peptides against the concentration gradient. During the transport cycle alternates between 'inward-facing' state with peptide binding site facing the cytosol to 'outward-facing' state with peptide binding site facing the ER lumen. Peptide antigen binding to ATP-loaded TAP1-TAP2 induces a switch to hydrolysis-competent 'outward-facing' conformation ready for peptide loading onto nascent MHCI molecules. Subsequently ATP hydrolysis resets the transporter to the 'inward facing' state for a new cycle. As a component of the peptide loading complex (PLC), acts as a molecular scaffold essential for peptide-MHCI assembly and antigen presentation. The sequence is that of Antigen peptide transporter 2 (Tap2) from Mus musculus (Mouse).